Consider the following 252-residue polypeptide: MERLLIVNADDFGLSKGQNYGIIEACRNGIVTSTTALVNGQAIDHAVQLSRDEPSLAIGMNFVLTMGKPLTAMPGLTRDGVLGKWIWQLAEEDALPLEEITQELASQYLRFIELFGRKPTHLDSHHHVHMFPQIFPIVARFAAEEGIALRIDRQPLSNAGDLPANLRSSHGFSSAFYGEEISEALFLQVLDDSSHRGERSLEVMCHPAFVDNTIRQSAYCFPRLTELEVLTSASLKYAIAERGYRLGSYLDV.

Histidine 125 is a binding site for Mg(2+).

It belongs to the YdjC deacetylase family. ChbG subfamily. As to quaternary structure, homodimer. Requires Mg(2+) as cofactor.

It is found in the cytoplasm. The catalysed reaction is N,N'-diacetylchitobiose + H2O = N-acetyl-beta-D-glucosaminyl-(1-&gt;4)-D-glucosamine + acetate. The enzyme catalyses diacetylchitobiose-6'-phosphate + H2O = N'-monoacetylchitobiose-6'-phosphate + acetate. It functions in the pathway glycan degradation; chitin degradation. In terms of biological role, involved in the degradation of chitin. ChbG is essential for growth on the acetylated chitooligosaccharides chitobiose and chitotriose but is dispensable for growth on cellobiose and chitosan dimer, the deacetylated form of chitobiose. Deacetylation of chitobiose-6-P and chitotriose-6-P is necessary for both the activation of the chb promoter by the regulatory protein ChbR and the hydrolysis of phosphorylated beta-glucosides by the phospho-beta-glucosidase ChbF. Catalyzes the removal of only one acetyl group from chitobiose-6-P to yield monoacetylchitobiose-6-P, the inducer of ChbR and the substrate of ChbF. In Escherichia coli O157:H7, this protein is Chitooligosaccharide deacetylase.